The following is a 130-amino-acid chain: Large ribosomal subunit protein bL20c (130 aa).

This sequence belongs to the bacterial ribosomal protein bL20 family.

It localises to the plastid. The protein localises to the chloroplast. Functionally, binds directly to 23S ribosomal RNA and is necessary for the in vitro assembly process of the 50S ribosomal subunit. It is not involved in the protein synthesizing functions of that subunit. In Fagopyrum esculentum subsp. ancestrale (Wild buckwheat), this protein is Large ribosomal subunit protein bL20c.